The chain runs to 681 residues: Cadmium, zinc and cobalt-transporting ATPase (681 aa).

The HMA domain maps to 1 to 66; the sequence is MQKYHFTGLD…LEPDMELSEQ (66 aa). The Cytoplasmic segment spans residues 1-72; sequence MQKYHFTGLD…LSEQVQSEAK (72 aa). Residues Cys-11 and Cys-14 each coordinate Cd(2+). Cys-11 and Cys-14 together coordinate Co(2+). Positions 11 and 14 each coordinate Zn(2+). A helical membrane pass occupies residues 73-92; that stretch reads PSAIPLLLSVVLYLIAVATI. Residues 93–102 lie on the Extracellular side of the membrane; sequence HFSAQNWALH. The helical transmembrane segment at 103–124 threads the bilayer; sequence LSYALLAGVYLVAGKDVFLGAL. Residues 125–131 lie on the Cytoplasmic side of the membrane; it reads RAIRNKQ. A helical membrane pass occupies residues 132–151; it reads FFDENTLMLSATIAAFGVGA. The Extracellular segment spans residues 152–154; sequence HEE. A helical transmembrane segment spans residues 155 to 174; that stretch reads AVSIMVFYSAGEFLQQLAIA. The Cytoplasmic portion of the chain corresponds to 175–308; the sequence is RSKQSLHALL…ITTFARYYTP (134 aa). Residues 309–327 traverse the membrane as a helical segment; the sequence is AVFAIALLIALVPPLLGHG. Topologically, residues 328 to 332 are extracellular; the sequence is DFDTW. The chain crosses the membrane as a helical span at residues 333-350; the sequence is IYRGLFALMVSCPCALVI. Over 351-630 the chain is Cytoplasmic; sequence SVPLGYFGGV…VFKIAKKTKR (280 aa). Asp-388 functions as the 4-aspartylphosphate intermediate in the catalytic mechanism. The Mg(2+) site is built by Asp-578 and Asp-582. Residues 631–652 traverse the membrane as a helical segment; sequence IIIENIIFALAIKAMFIVLGLS. Topologically, residues 653 to 660 are extracellular; it reads GDASLWEA. Residues 661–676 traverse the membrane as a helical segment; that stretch reads VLGDVGVTLIALANSM. Residues 677 to 681 are Cytoplasmic-facing; that stretch reads RTMRI.

This sequence belongs to the cation transport ATPase (P-type) (TC 3.A.3) family. Type IB subfamily.

It localises to the cell membrane. The enzyme catalyses Zn(2+)(in) + ATP + H2O = Zn(2+)(out) + ADP + phosphate + H(+). It carries out the reaction Cd(2+)(in) + ATP + H2O = Cd(2+)(out) + ADP + phosphate + H(+). Couples the hydrolysis of ATP with the transport of cadmium, zinc and cobalt out of the cell. This Helicobacter felis protein is Cadmium, zinc and cobalt-transporting ATPase (cadA).